The primary structure comprises 619 residues: Coagulation factor X-activating enzyme heavy chain (619 aa).

The first 20 residues, 1–20 (MMQVLLVTISLAVFPYQGSS), serve as a signal peptide directing secretion. Residues 21 to 188 (IILESGNVND…SDKPIKKASQ (168 aa)) constitute a propeptide that is removed on maturation. The 195-residue stretch at 199–393 (IFIELVIIVD…YKPKCIFNPP (195 aa)) folds into the Peptidase M12B domain. A disulfide bond links cysteine 215 and cysteine 251. 2 N-linked (GlcNAc...) (complex) asparagine glycosylation sites follow: asparagine 216 and asparagine 257. Disulfide bonds link cysteine 308–cysteine 388, cysteine 348–cysteine 372, and cysteine 350–cysteine 355. Residue histidine 333 coordinates Zn(2+). Residue glutamate 334 is part of the active site. Zn(2+) is bound by residues histidine 337 and histidine 343. Asparagine 351 and asparagine 371 each carry an N-linked (GlcNAc...) (complex) asparagine glycan. Residues 401–487 (PPVCGNEIWE…ECPRDQLQQN (87 aa)) form the Disintegrin domain. Ca(2+) is bound by residues valine 403, asparagine 406, isoleucine 408, glutamate 410, glutamate 413, and aspartate 416. Intrachain disulfides connect cysteine 404–cysteine 433, cysteine 415–cysteine 428, cysteine 417–cysteine 423, cysteine 427–cysteine 450, cysteine 441–cysteine 447, cysteine 446–cysteine 472, cysteine 459–cysteine 479, cysteine 466–cysteine 498, cysteine 491–cysteine 503, cysteine 510–cysteine 560, cysteine 525–cysteine 571, cysteine 538–cysteine 548, cysteine 555–cysteine 597, and cysteine 591–cysteine 603. A D/ECD-tripeptide motif is present at residues 465–467 (ECD). The Ca(2+) site is built by aspartate 467, valine 468, glutamate 470, aspartate 482, and glutamine 483.

The protein belongs to the venom metalloproteinase (M12B) family. P-III subfamily. P-IIId sub-subfamily. Heterotrimer; disulfide-linked. The heterotrimer consists of 1 heavy chain and 2 light chains (lectins): LC1 and LC2. Requires Zn(2+) as cofactor. In terms of processing, N-glycosylated; probably required for conformation. Removal of easily accessible sugars does not change its functional capacity, but removal of the core sugars with N-glycanase causes a virtually complete loss of enzyme activity, apparently as a result of major conformational changes in the molecule. Not O-glycosylated. Expressed by the venom gland.

It localises to the secreted. It catalyses the reaction Specifically activates several components of the blood clotting system, including coagulation factor X, coagulation factor IX and protein C by cleavage of Arg-|-Xaa bonds. Has no action on insulin B chain.. Catalytic subunit of blood coagulation factor X-activating enzyme. Activates coagulation factor X (F10) by cleaving the Arg-Ile bond and is also able to activate coagulation factor IX (F9) and protein S (PROS1) by specific cleavage of Arg-Ile and Arg-Val bonds. This is Coagulation factor X-activating enzyme heavy chain from Daboia siamensis (Eastern Russel's viper).